The chain runs to 68 residues: MNFYVNQSIIINSIKIDSITTSSVFQIGTAGSIKALSKFSNTGGFTEPLRPLQAKGQIISIKPSTSSS.

Its function is as follows. Required for the formation of functionally normal spores. Could be involved in the establishment of normal spore coat structure and/or permeability, which allows the access of germinants to their receptor. The polypeptide is Probable spore germination protein GerPB (gerPB) (Bacillus cereus).